Consider the following 426-residue polypeptide: Serine protease HTRA2, mitochondrial (426 aa).

A compositionally biased stretch (low complexity) spans 31–58 (SSTCNSTNTDNGSHNTNYNSSNNNNNNN). Positions 31–59 (SSTCNSTNTDNGSHNTNYNSSNNNNNNND) are disordered. The helical transmembrane segment at 71 to 87 (FLVPFSLGALASSVVAG) threads the bilayer. An IAP-binding motif is present at residues 79–82 (ALAS). The segment at 143–306 (SNGSGFVIEQ…IPIDYVKLFL (164 aa)) is serine protease. Catalysis depends on charge relay system residues His161, Asp193, and Ser270. The PDZ domain maps to 329–414 (MGITMLTLTP…DLDMVILRGV (86 aa)).

It belongs to the peptidase S1C family. In terms of assembly, interacts with th/DIAP1 (via BIR 2 domain).

Its subcellular location is the mitochondrion intermembrane space. It localises to the mitochondrion membrane. The catalysed reaction is Cleavage of non-polar aliphatic amino-acids at the P1 position, with a preference for Val, Ile and Met. At the P2 and P3 positions, Arg is selected most strongly with a secondary preference for other hydrophilic residues.. Serine protease that shows proteolytic activity against a non-specific substrate beta-casein. Promotes or induces cell death either by direct binding to and inhibition of BIRC proteins (also called inhibitor of apoptosis proteins, IAPs), leading to an increase in caspase activity, or by a BIRC inhibition-independent, caspase-independent and serine protease activity-dependent mechanism. Can antagonize antiapoptotic activity of th/Diap1 by directly inducing the degradation of th/Diap1. In Drosophila grimshawi (Hawaiian fruit fly), this protein is Serine protease HTRA2, mitochondrial.